The primary structure comprises 343 residues: Heat-inducible transcription repressor HrcA (343 aa).

Belongs to the HrcA family.

Functionally, negative regulator of class I heat shock genes (grpE-dnaK-dnaJ and groELS operons). Prevents heat-shock induction of these operons. The chain is Heat-inducible transcription repressor HrcA from Natranaerobius thermophilus (strain ATCC BAA-1301 / DSM 18059 / JW/NM-WN-LF).